Here is a 126-residue protein sequence, read N- to C-terminus: uncharacterized protein (126 aa).

Residues 1 to 101 (MQASSEPANV…KSVGSQSADE (101 aa)) form a disordered region. Polar residues-rich tracts occupy residues 14–27 (GQNQ…STSP) and 86–99 (DTEA…SQSA).

This is an uncharacterized protein from Schizosaccharomyces pombe (strain 972 / ATCC 24843) (Fission yeast).